We begin with the raw amino-acid sequence, 154 residues long: Transcriptional repressor NrdR (154 aa).

A zinc finger lies at 3 to 34 (CPFCGANDTKVIDSRLVAEGEQVRRRRECLAC). Positions 49–139 (PRLIKQDGSR…VYRRFQDLNE (91 aa)) constitute an ATP-cone domain.

It belongs to the NrdR family. Zn(2+) serves as cofactor.

Negatively regulates transcription of bacterial ribonucleotide reductase nrd genes and operons by binding to NrdR-boxes. This chain is Transcriptional repressor NrdR, found in Pseudomonas savastanoi pv. phaseolicola (strain 1448A / Race 6) (Pseudomonas syringae pv. phaseolicola (strain 1448A / Race 6)).